Consider the following 1802-residue polypeptide: Protein TIC 214 (1802 aa).

6 helical membrane passes run 19–39 (IINSVVVVGLYYGFLTTFSIG), 68–88 (FIAGQLMMFISIYYAPLHLAL), 91–111 (PHTITVLALPYLLFHFFWNNH), 133–153 (VFLNNLIFQLFNHFILPSSML), 176–196 (VGWLIGHILFMKWVGLVLVWI), and 227–247 (IFSILLFITCVYYLGRIPSPI).

It belongs to the TIC214 family. In terms of assembly, part of the Tic complex.

The protein localises to the plastid. It localises to the chloroplast inner membrane. Functionally, involved in protein precursor import into chloroplasts. May be part of an intermediate translocation complex acting as a protein-conducting channel at the inner envelope. The sequence is that of Protein TIC 214 from Nasturtium officinale (Watercress).